The sequence spans 160 residues: Probable NADH dehydrogenase [ubiquinone] 1 beta subcomplex subunit 2, mitochondrial (160 aa).

The protein belongs to the complex I NDUFB2 subunit family. In terms of assembly, complex I is composed of 45 different subunits.

It localises to the mitochondrion inner membrane. Accessory subunit of the mitochondrial membrane respiratory chain NADH dehydrogenase (Complex I), that is believed not to be involved in catalysis. Complex I functions in the transfer of electrons from NADH to the respiratory chain. The immediate electron acceptor for the enzyme is believed to be ubiquinone. The sequence is that of Probable NADH dehydrogenase [ubiquinone] 1 beta subcomplex subunit 2, mitochondrial from Caenorhabditis briggsae.